The chain runs to 568 residues: Vacuolar protein 8 (568 aa).

The N-myristoyl glycine moiety is linked to residue Gly2. S-palmitoyl cysteine attachment occurs at residues Cys4, Cys5, and Cys7. ARM repeat units follow at residues 37 to 74 (DKDN…FAEI), 75 to 114 (TEKY…NLAV), 116 to 155 (NENK…NLAT), 157 to 196 (DDNK…NMTH), 198 to 237 (GENR…NIAV), 241 to 280 (NRRK…NLAS), 282 to 321 (TGYQ…NISI), 323 to 363 (PLNE…NLAA), and 407 to 446 (DNSK…NLCS).

It belongs to the beta-catenin family.

It localises to the vacuole membrane. Its function is as follows. Functions in both vacuole inheritance and protein targeting from the cytoplasm to vacuole. The polypeptide is Vacuolar protein 8 (VAC8) (Eremothecium gossypii (strain ATCC 10895 / CBS 109.51 / FGSC 9923 / NRRL Y-1056) (Yeast)).